The sequence spans 73 residues: Small ribosomal subunit protein bS21 (73 aa).

It belongs to the bacterial ribosomal protein bS21 family.

This chain is Small ribosomal subunit protein bS21, found in Parvibaculum lavamentivorans (strain DS-1 / DSM 13023 / NCIMB 13966).